Here is an 894-residue protein sequence, read N- to C-terminus: Interleukin enhancer-binding factor 3 (894 aa).

The region spanning 5–378 (RIFVNDDRHV…PMKRPMEEDG (374 aa)) is the DZF domain. Positions 50–86 (DEQEKGSSEQAESDNMDVPPEDDSKEGAGEQKTEHMT) are disordered. Residues 60–73 (AESDNMDVPPEDDS) show a composition bias toward acidic residues. Ser62 bears the Phosphoserine mark. Positions 74-86 (KEGAGEQKTEHMT) are enriched in basic and acidic residues. The residue at position 100 (Lys100) is an N6-acetyllysine. At Thr188 the chain carries Phosphothreonine; by PKR. The residue at position 190 (Ser190) is a Phosphoserine. Lys297 participates in a covalent cross-link: Glycyl lysine isopeptide (Lys-Gly) (interchain with G-Cter in ubiquitin). Residue Thr315 is modified to Phosphothreonine; by PKR. A Glycyl lysine isopeptide (Lys-Gly) (interchain with G-Cter in SUMO1) cross-link involves residue Lys348. The interval 363–401 (TTYAITPMKRPMEEDGEEKSPSKKKKKIQKKEEKAEPPQ) is disordered. The Bipartite nuclear localization signal signature appears at 371-389 (KRPMEEDGEEKSPSKKKKK). Residues 372 to 383 (RPMEEDGEEKSP) show a composition bias toward basic and acidic residues. 2 positions are modified to phosphoserine: Ser382 and Ser384. A Glycyl lysine isopeptide (Lys-Gly) (interchain with G-Cter in SUMO2) cross-link involves residue Lys396. The DRBM 1 domain maps to 398–467 (EPPQAMNALM…AVKVLQDMGL (70 aa)). Lys460 is subject to N6-acetyllysine. The disordered stretch occupies residues 466-524 (GLPTGAEGRDSSKGEDSAEETEAKPAVVAPAPVVEAVSTPSAAFPSDATAEQGPILTKH). Positions 472–481 (EGRDSSKGED) are enriched in basic and acidic residues. Residues Ser476, Ser477, and Ser482 each carry the phosphoserine modification. Residue Lys489 forms a Glycyl lysine isopeptide (Lys-Gly) (interchain with G-Cter in SUMO2) linkage. The segment covering 489–508 (KPAVVAPAPVVEAVSTPSAA) has biased composition (low complexity). In terms of domain architecture, DRBM 2 spans 524–590 (HGKNPVMELN…ALAALEKLFP (67 aa)). Thr592 bears the Phosphothreonine mark. An interaction with PRMT1 region spans residues 609-894 (RGGPKFAAKP…ADHSMNYQYR (286 aa)). 2 disordered regions span residues 625 to 660 (MGGP…FGGA) and 718 to 894 (QGDN…YQYR). A compositionally biased stretch (gly residues) spans 644–660 (RGGSIRGRGRGRGFGGA). 2 stretches are compositionally biased toward low complexity: residues 743–770 (PSYG…YGPP) and 777–792 (YNHG…SYNS). A phosphoserine mark is found at Ser792, Ser810, Ser812, and Ser816. 2 stretches are compositionally biased toward gly residues: residues 811–825 (GSGG…GSGG) and 832–851 (SHGG…GKQG). A compositionally biased stretch (polar residues) spans 857-866 (NYNSPGSGQN). Positions 867–878 (YSGPPSSYQSSQ) are enriched in low complexity.

Identified in a IGF2BP1-dependent mRNP granule complex containing untranslated mRNAs. Interacts with FUS and SMN. Interacts (via C-terminus) with PRMT1. Forms a complex with ILF2. Can also bind to PRKDC/XRCC7: this may stabilize the interaction of PRKDC/XRCC7 and the heterodimeric complex of XRCC6/KU70 and XRCC5/KU80. Forms a heteromeric complex with ZNF346 and ILF3. Found in a nuclear export complex with XPO5, ILF3, Ran and double-stranded RNA or double-stranded minihelix VA1 RNA. Found in a nuclear export complex with XPO5, RAN, ILF3, ZNF346 and double-stranded RNA. Interacts with XPO5 and ZNF346. Forms a complex with ILF2, YLPM1, KHDRBS1, RBMX, NCOA5 and PPP1CA. Interacts with AGO1 and AGO2. Interacts with DHX36; this interaction occurs in a RNA-dependent manner. Interacts with ELAVL1; this interaction occurs in a RNA-dependent manner. Interacts with HAVCR2; this interaction promotes ILF3 ubiquitination and subsequent degradation. In terms of processing, phosphorylated at Thr-188 and Thr-315 by PKR in response to certain RNA viruses. This phosphorylation results in the dissociation of ILF2 from the ILF2-ILF3 complex resulting in a cytoplasmic sequestration of ILF3 where it can bind to viral RNAs and impede viral replication. Methylated by protein arginine N-methyltransferase 1. Post-translationally, ubiquitinated at Lys-297 in a TRIM47-dependent manner; this 'Lys-48'-linked ubiquitination promotes ILF3 degradation. As to expression, ubiquitous.

The protein resides in the nucleus. The protein localises to the nucleolus. It localises to the cytoplasm. Its function is as follows. RNA-binding protein that plays an essential role in the biogenesis of circular RNAs (circRNAs) which are produced by back-splicing circularization of pre-mRNAs. Within the nucleus, promotes circRNAs processing by stabilizing the regulatory elements residing in the flanking introns of the circularized exons. Plays thereby a role in the back-splicing of a subset of circRNAs. As a consequence, participates in a wide range of transcriptional and post-transcriptional processes. Binds to poly-U elements and AU-rich elements (AREs) in the 3'-UTR of target mRNAs. Upon viral infection, ILF3 accumulates in the cytoplasm and participates in the innate antiviral response. Mechanistically, ILF3 becomes phosphorylated and activated by the double-stranded RNA-activated protein kinase/PKR which releases ILF3 from cellular mature circRNAs. In turn, unbound ILF3 molecules are able to interact with and thus inhibit viral mRNAs. (Microbial infection) Plays a positive role in HIV-1 virus production by binding to and thereby stabilizing HIV-1 RNA, together with ILF3. The chain is Interleukin enhancer-binding factor 3 (ILF3) from Homo sapiens (Human).